The chain runs to 518 residues: GMP synthase [glutamine-hydrolyzing] (518 aa).

Residues 8 to 201 (TVLIIDFGSQ…VLKISNLKGN (194 aa)) form the Glutamine amidotransferase type-1 domain. The active-site Nucleophile is Cys85. Catalysis depends on residues His175 and Glu177. The GMPS ATP-PPase domain maps to 202-393 (WSMASYREQT…LGLPEQFIGR (192 aa)). Residue 229-235 (SGGVDSS) coordinates ATP.

Homodimer.

The enzyme catalyses XMP + L-glutamine + ATP + H2O = GMP + L-glutamate + AMP + diphosphate + 2 H(+). Its pathway is purine metabolism; GMP biosynthesis; GMP from XMP (L-Gln route): step 1/1. In terms of biological role, catalyzes the synthesis of GMP from XMP. This Bartonella henselae (strain ATCC 49882 / DSM 28221 / CCUG 30454 / Houston 1) (Rochalimaea henselae) protein is GMP synthase [glutamine-hydrolyzing].